A 123-amino-acid polypeptide reads, in one-letter code: Aspartate 1-decarboxylase (123 aa).

Residue Ser-25 is the Schiff-base intermediate with substrate; via pyruvic acid of the active site. The residue at position 25 (Ser-25) is a Pyruvic acid (Ser). Thr-57 contacts substrate. Tyr-58 serves as the catalytic Proton donor. Substrate is bound at residue Gly-73 to Ala-75.

The protein belongs to the PanD family. In terms of assembly, heterooctamer of four alpha and four beta subunits. It depends on pyruvate as a cofactor. Is synthesized initially as an inactive proenzyme, which is activated by self-cleavage at a specific serine bond to produce a beta-subunit with a hydroxyl group at its C-terminus and an alpha-subunit with a pyruvoyl group at its N-terminus.

Its subcellular location is the cytoplasm. The enzyme catalyses L-aspartate + H(+) = beta-alanine + CO2. It functions in the pathway cofactor biosynthesis; (R)-pantothenate biosynthesis; beta-alanine from L-aspartate: step 1/1. In terms of biological role, catalyzes the pyruvoyl-dependent decarboxylation of aspartate to produce beta-alanine. The protein is Aspartate 1-decarboxylase of Clostridium novyi (strain NT).